The chain runs to 501 residues: U6 snRNA (guanine-N(2))-methyltransferase THUMPD2 (501 aa).

Positions 149–264 constitute a THUMP domain; that stretch reads TEQIQELQET…DVYSVLGIPV (116 aa). The disordered stretch occupies residues 414–469; sequence LKGGEASSGPLNSQGGHTEEPGGEERLTPAEKAAVSEPVSSPFAASNQGRLDRMPP. Residues 430–442 show a composition bias toward basic and acidic residues; the sequence is HTEEPGGEERLTP.

The protein belongs to the methyltransferase superfamily. Part of the heterodimeric THUMPD2-TRM112 methyltransferase complex; this complex forms an active tRNA methyltransferase, where TRMT112 acts as an activator of the catalytic subunit THUMPD2.

Its subcellular location is the nucleus. It carries out the reaction guanosine in U6 snRNA + S-adenosyl-L-methionine = N(2)-methylguanosine in U6 snRNA + S-adenosyl-L-homocysteine + H(+). Its function is as follows. Catalytic subunit of the THUMPD2-TRM112 methyltransferase complex, that specifically mediates the S-adenosyl-L-methionine-dependent N(2)-methylation of guanosine nucleotides, most probably at position 72 (m2G72), in the U6snRNA of the major spliceosome. This modification in the U6 snRNA affects the constitutive splicing efficiency of introns that have suboptimal splice sites and can impact final mRNA levels. The sequence is that of U6 snRNA (guanine-N(2))-methyltransferase THUMPD2 from Bos taurus (Bovine).